The sequence spans 582 residues: Leucine-rich repeat protein SHOC-2 (582 aa).

2 stretches are compositionally biased toward basic and acidic residues: residues 1 to 29 (MSSS…KEAK) and 36 to 57 (KESK…KKES). Residues 1 to 90 (MSSSLGKEKD…TRKKSSNAEV (90 aa)) are disordered. An RVxF motif; important for interaction with PP1c motif is present at residues 63-66 (GVAF). LRR repeat units follow at residues 101–122 (NSMR…VKEL), 124–145 (QLTE…VGCL), 147–169 (NLMT…DNLK), 170–191 (KLRM…VYRL), 193–215 (SLTT…RNLP), 216–237 (RLST…IGEL), 239–260 (NLIT…IGNC), 262–283 (QITN…IGNL), 285–307 (SLNR…AKCS), 308–329 (ALEE…LLSS), 332–353 (KLNS…GPSQ), 356–377 (TIYS…IFSR), 380–400 (VLSK…DFGT), 403–424 (SMVE…VSGL), 426–448 (SLEV…GNLR), 449–470 (KLRE…IAYL), 472–494 (DLQK…GHLT), 495–516 (NLTH…IGTL), 518–540 (NLEE…LALC), and 542–563 (KLSI…IVAG).

The protein belongs to the SHOC2 family. As to quaternary structure, component of the SHOC2-MRAS-PP1c (SMP) complex consisting of SHOC2, GTP-bound M-Ras/MRAS and the catalytic subunit of protein phosphatase 1 (either PPP1CA, PPP1CB or PPP1CC). SHOC2 and PP1c preferably bind M-Ras/MRAS, but they also bind K-Ras/KRAS, N-Ras/NRAS and H-Ras/HRAS; these interactions are GTP-dependent and both SHOC2 and PP1c are required to form a stable complex. Interacts with PP1c in the absence of Ras GTPases. Interacts with M-Ras/MRAS and RAF1. Interacts with ERBIN; disrupts the interaction with RAF1 and Ras, preventing the activation of the Ras signaling pathway. Interacts with LZTR1.

Its subcellular location is the cytoplasm. The protein resides in the nucleus. Functionally, core component of the SHOC2-MRAS-PP1c (SMP) holophosphatase complex that regulates activation of the MAPK pathway. Acts as a scaffolding protein in the SMP complex. The SMP complex specifically dephosphorylates the inhibitory phosphorylation at 'Ser-259' of RAF1 kinase, 'Ser-365' of BRAF kinase and 'Ser-214' of ARAF kinase, stimulating their kinase activities. The SMP complex enhances the dephosphorylation activity and substrate specificity of PP1c. The protein is Leucine-rich repeat protein SHOC-2 (Shoc2) of Rattus norvegicus (Rat).